The following is a 253-amino-acid chain: Trypsin delta (253 aa).

A signal peptide spans 1–22; sequence MLKFVILLSAVACALGGTIPEG. Positions 23–30 are cleaved as a propeptide — activation peptide; the sequence is LLPQLDGR. Residues 31–253 form the Peptidase S1 domain; sequence IVGGTATTIS…DLRAWVVRNA (223 aa). Residues C56 and C72 are joined by a disulfide bond. Catalysis depends on charge relay system residues H71 and D116. 2 disulfides stabilise this stretch: C180–C197 and C206–C230. S210 serves as the catalytic Charge relay system.

It belongs to the peptidase S1 family.

It localises to the secreted. The protein localises to the extracellular space. The enzyme catalyses Preferential cleavage: Arg-|-Xaa, Lys-|-Xaa.. The sequence is that of Trypsin delta from Drosophila erecta (Fruit fly).